The following is a 294-amino-acid chain: Phosphoribosylaminoimidazole-succinocarboxamide synthase (294 aa).

The protein belongs to the SAICAR synthetase family.

The catalysed reaction is 5-amino-1-(5-phospho-D-ribosyl)imidazole-4-carboxylate + L-aspartate + ATP = (2S)-2-[5-amino-1-(5-phospho-beta-D-ribosyl)imidazole-4-carboxamido]succinate + ADP + phosphate + 2 H(+). It functions in the pathway purine metabolism; IMP biosynthesis via de novo pathway; 5-amino-1-(5-phospho-D-ribosyl)imidazole-4-carboxamide from 5-amino-1-(5-phospho-D-ribosyl)imidazole-4-carboxylate: step 1/2. The chain is Phosphoribosylaminoimidazole-succinocarboxamide synthase from Rhodococcus jostii (strain RHA1).